A 426-amino-acid polypeptide reads, in one-letter code: uncharacterized protein (426 aa).

3 Solcar repeats span residues 125–216 (KNNV…MKRV), 226–315 (HSPL…LKRT), and 334–422 (PNGL…CKKW). Helical transmembrane passes span 130–151 (YFISGGIAGIVSRTCTAPLDRL), 193–213 (GINVLKVMPESSIKFGTYEAM), 229–249 (LYSYLAGGMAGSVAQMFIYPV), 290–310 (GVLVGILGMFPYSATDLGTFE), 336–356 (GLVMAFGALSGSTGATIVFPL), and 394–415 (LYKGLSPNLLKVAPSVAISYLV).

The protein belongs to the mitochondrial carrier (TC 2.A.29) family.

It is found in the mitochondrion inner membrane. This is an uncharacterized protein from Schizosaccharomyces pombe (strain 972 / ATCC 24843) (Fission yeast).